The following is a 649-amino-acid chain: Threonine--tRNA ligase (649 aa).

In terms of domain architecture, TGS spans 1 to 66 (MVQITLPDGS…DNDAQLAIVT (66 aa)). Residues 247–538 (DHRKIGRELD…LIENHAGAMP (292 aa)) form a catalytic region. The Zn(2+) site is built by Cys338, His389, and His515.

It belongs to the class-II aminoacyl-tRNA synthetase family. Homodimer. Requires Zn(2+) as cofactor.

The protein localises to the cytoplasm. The enzyme catalyses tRNA(Thr) + L-threonine + ATP = L-threonyl-tRNA(Thr) + AMP + diphosphate + H(+). Functionally, catalyzes the attachment of threonine to tRNA(Thr) in a two-step reaction: L-threonine is first activated by ATP to form Thr-AMP and then transferred to the acceptor end of tRNA(Thr). Also edits incorrectly charged L-seryl-tRNA(Thr). The chain is Threonine--tRNA ligase from Bordetella bronchiseptica (strain ATCC BAA-588 / NCTC 13252 / RB50) (Alcaligenes bronchisepticus).